The chain runs to 153 residues: MQCPYCNYKESKVIDSRHTDLKSIRRRRECESCKKRFTTYEKIETTPLMVIKKDNSREYFDREKIKYGLLKACEKRPVSIDEIESIVVHIENEINKCFIEEIETKKIGEMVMDKLKELDEVAYVRFASVYRQFKDINTFVNELKSILIEKGDK.

The segment at 3 to 33 is a zinc-finger region; it reads CPYCNYKESKVIDSRHTDLKSIRRRRECESC. The 91-residue stretch at 48–138 folds into the ATP-cone domain; the sequence is LMVIKKDNSR…VYRQFKDINT (91 aa).

The protein belongs to the NrdR family. It depends on Zn(2+) as a cofactor.

In terms of biological role, negatively regulates transcription of bacterial ribonucleotide reductase nrd genes and operons by binding to NrdR-boxes. The sequence is that of Transcriptional repressor NrdR from Clostridioides difficile (strain 630) (Peptoclostridium difficile).